We begin with the raw amino-acid sequence, 347 residues long: tRNA N6-adenosine threonylcarbamoyltransferase (347 aa).

Positions 117 and 121 each coordinate Fe cation. Substrate contacts are provided by residues 140-144 (LVSGG), Asp-174, Gly-187, Asp-191, and Asn-281. Asp-309 is a Fe cation binding site.

The protein belongs to the KAE1 / TsaD family. It depends on Fe(2+) as a cofactor.

It is found in the cytoplasm. It catalyses the reaction L-threonylcarbamoyladenylate + adenosine(37) in tRNA = N(6)-L-threonylcarbamoyladenosine(37) in tRNA + AMP + H(+). In terms of biological role, required for the formation of a threonylcarbamoyl group on adenosine at position 37 (t(6)A37) in tRNAs that read codons beginning with adenine. Is involved in the transfer of the threonylcarbamoyl moiety of threonylcarbamoyl-AMP (TC-AMP) to the N6 group of A37, together with TsaE and TsaB. TsaD likely plays a direct catalytic role in this reaction. The sequence is that of tRNA N6-adenosine threonylcarbamoyltransferase from Thermobifida fusca (strain YX).